Here is a 141-residue protein sequence, read N- to C-terminus: Hemoglobin subunit alpha (141 aa).

Residues 1–141 (VLSAADKTNV…VATVLTSKYR (141 aa)) form the Globin domain. Ser3 carries the phosphoserine modification. Residue Lys7 is modified to N6-succinyllysine. Thr8 is modified (phosphothreonine). Position 11 is an N6-succinyllysine (Lys11). Residue Lys16 is modified to N6-acetyllysine; alternate. Lys16 is subject to N6-succinyllysine; alternate. The residue at position 24 (Tyr24) is a Phosphotyrosine. The residue at position 35 (Ser35) is a Phosphoserine. N6-succinyllysine is present on Lys40. A Phosphoserine modification is found at Ser49. His58 lines the O2 pocket. Residue His87 coordinates heme b. The residue at position 102 (Ser102) is a Phosphoserine. Phosphothreonine is present on Thr108. Ser124 is subject to Phosphoserine. Phosphothreonine is present on residues Thr134 and Thr137. Ser138 bears the Phosphoserine mark.

Belongs to the globin family. As to quaternary structure, heterotetramer of two alpha chains and two beta chains. In terms of tissue distribution, red blood cells.

Involved in oxygen transport from the lung to the various peripheral tissues. Functionally, hemopressin acts as an antagonist peptide of the cannabinoid receptor CNR1. Hemopressin-binding efficiently blocks cannabinoid receptor CNR1 and subsequent signaling. The sequence is that of Hemoglobin subunit alpha (HBA) from Ctenodactylus gundi (Northern gundi).